A 151-amino-acid chain; its full sequence is 3-hydroxyacyl-[acyl-carrier-protein] dehydratase FabZ (151 aa).

Histidine 54 is a catalytic residue.

The protein belongs to the thioester dehydratase family. FabZ subfamily.

Its subcellular location is the cytoplasm. The enzyme catalyses a (3R)-hydroxyacyl-[ACP] = a (2E)-enoyl-[ACP] + H2O. Involved in unsaturated fatty acids biosynthesis. Catalyzes the dehydration of short chain beta-hydroxyacyl-ACPs and long chain saturated and unsaturated beta-hydroxyacyl-ACPs. This chain is 3-hydroxyacyl-[acyl-carrier-protein] dehydratase FabZ, found in Blochmanniella floridana.